A 307-amino-acid polypeptide reads, in one-letter code: Cyclin-dependent kinase 5 activator 1 (307 aa).

G2 carries the N-myristoyl glycine lipid modification. A Phosphoserine; by CDK5 modification is found at S8. Positions 97–136 (TFAQPPPAQPPAPPASQLSGSQTGGSSSVKKAPHPAVTSA) are disordered. Pro residues predominate over residues 100–110 (QPPPAQPPAPP). The segment covering 111–124 (ASQLSGSQTGGSSS) has biased composition (low complexity). T138 carries the phosphothreonine; by CDK5 modification.

The protein belongs to the cyclin-dependent kinase 5 activator family. As to quaternary structure, heterodimer composed of a catalytic subunit CDK5 and a regulatory subunit CDK5R1 (p25) and macromolecular complex composed of at least CDK5, CDK5R1 (p35) and CDK5RAP1 or CDK5RAP2 or CDK5RAP3. Only the heterodimer shows kinase activity. Interacts with EPHA4 and NGEF; may mediate the activation of NGEF by EPHA4. Interacts with RASGRF2. The complex p35/CDK5 interacts with CLOCK. Post-translationally, the p35 form is proteolytically cleaved by calpain, giving rise to the p25 form. P35 has a 5 to 10 fold shorter half-life compared to p25. The conversion results in deregulation of the CDK5 kinase: p25/CDK5 kinase displays an increased and altered tau phosphorylation in comparison to the p35/CDK5 kinase in vivo. Myristoylated. A proper myristoylation signal is essential for the proper distribution of p35. In terms of processing, ubiquitinated, leading to its degradation: degradation of p35 by proteasome results in down-regulation of CDK5 activity. During this process, CDK5 phosphorylates p35 and induces its ubiquitination and subsequent degradation. Ubiquitinated by the CRL2(FEM1B) complex, which recognizes the -Gly-Leu-Asp-Arg C-degron at the C-terminus, leading to its degradation. Post-translationally, phosphorylation at Ser-8 and Thr-138 by CDK5 prevents calpain-mediated proteolysis. As to expression, brain and neuron specific.

The protein resides in the cell membrane. It is found in the cell projection. It localises to the neuron projection. Its subcellular location is the nucleus. The protein localises to the cytoplasm. The protein resides in the perinuclear region. It is found in the perikaryon. Functionally, p35 is a neuron specific activator of CDK5. The complex p35/CDK5 is required for neurite outgrowth and cortical lamination. Involved in dendritic spine morphogenesis by mediating the EFNA1-EPHA4 signaling. Activator of TPKII. The complex p35/CDK5 participates in the regulation of the circadian clock by modulating the function of CLOCK protein: phosphorylates CLOCK at 'Thr-451' and 'Thr-461' and regulates the transcriptional activity of the CLOCK-BMAL1 heterodimer in association with altered stability and subcellular distribution. The polypeptide is Cyclin-dependent kinase 5 activator 1 (CDK5R1) (Homo sapiens (Human)).